The following is a 431-amino-acid chain: 5-methylthioadenosine/S-adenosylhomocysteine deaminase (431 aa).

His61 and His63 together coordinate Zn(2+). 2 residues coordinate substrate: Glu90 and His183. Zn(2+) is bound at residue His210. Residues Glu213 and Asp298 each contribute to the substrate site. Zn(2+) is bound at residue Asp298.

Belongs to the metallo-dependent hydrolases superfamily. MTA/SAH deaminase family. Zn(2+) serves as cofactor.

It catalyses the reaction S-adenosyl-L-homocysteine + H2O + H(+) = S-inosyl-L-homocysteine + NH4(+). It carries out the reaction S-methyl-5'-thioadenosine + H2O + H(+) = S-methyl-5'-thioinosine + NH4(+). Functionally, catalyzes the deamination of 5-methylthioadenosine and S-adenosyl-L-homocysteine into 5-methylthioinosine and S-inosyl-L-homocysteine, respectively. Is also able to deaminate adenosine. The chain is 5-methylthioadenosine/S-adenosylhomocysteine deaminase from Halobacterium salinarum (strain ATCC 700922 / JCM 11081 / NRC-1) (Halobacterium halobium).